The primary structure comprises 1770 residues: Vitellogenin (1770 aa).

The first 16 residues, 1–16 (MLLLLTLLLFAGTVAA), serve as a signal peptide directing secretion. The 788-residue stretch at 22-809 (WQVGNEYTYL…SEDSVIPRIL (788 aa)) folds into the Vitellogenin domain. Cys-178 and Cys-222 are oxidised to a cystine. N-linked (GlcNAc...) asparagine glycosylation occurs at Asn-296. A disordered region spans residues 373–394 (SSSSSISSSEENDFWQPKPTLE). N-linked (GlcNAc...) asparagine glycosylation is present at Asn-1067. A VWFD domain is found at 1442–1635 (TSCMLDKTRA…SYALISNQCE (194 aa)). 2 cysteine pairs are disulfide-bonded: Cys-1444/Cys-1598 and Cys-1466/Cys-1634.

Accumulates in the hemolymph. Represents up to 70% of the queen's hemolymph proteins. During the first week of the worker adult life, when it becomes a nurse bee and performs brood-rearing tasks, the vitellogenin titer increases and may account for up to 40% of the total hemolymph proteins.

Its subcellular location is the secreted. Functionally, precursor of the egg-yolk proteins that are sources of nutrients during embryonic development. Involved in the differentiation of honeybee larvae into queens. This is Vitellogenin (Vg) from Apis mellifera (Honeybee).